A 686-amino-acid chain; its full sequence is Aminodeoxychorismate synthase (686 aa).

Positions 2–194 constitute a Glutamine amidotransferase type-1 domain; it reads RTLLIDNYDS…RDLALAHHRA (193 aa). The Nucleophile role is filled by Cys81. Active-site residues include His168 and Glu170. A PABB component region spans residues 233–686; the sequence is LDSSSVLEGA…LDGSAVAGAR (454 aa).

This sequence in the C-terminal section; belongs to the anthranilate synthase component I family.

It catalyses the reaction chorismate + L-glutamine = 4-amino-4-deoxychorismate + L-glutamate. It participates in antibiotic biosynthesis. Its function is as follows. Involved in chloramphenicol biosynthesis. Catalyzes the biosynthesis of 4-amino-4-deoxychorismate (ADC) from chorismate and glutamine. This Streptomyces venezuelae (strain ATCC 10712 / CBS 650.69 / DSM 40230 / JCM 4526 / NBRC 13096 / PD 04745) protein is Aminodeoxychorismate synthase.